The following is a 4473-amino-acid chain: Plectin (4473 aa).

Calponin-homology (CH) domains are found at residues 1 to 74 (DGHN…LHFQ) and 87 to 192 (MTAK…DAMP). The segment at 1-192 (DGHNLISLLE…YVSSLYDAMP (192 aa)) is actin-binding. Positions 1-1259 (DGHNLISLLE…SELTTLTSQY (1259 aa)) are globular 1. One copy of the Spectrin 1 repeat lies at 449 to 508 (RYLQDLLAWVEENQRRIDSAEWGVDLPSVEAQLGSHRGMHQSIEEFRAKIERARNDESQL). A Phosphoserine modification is found at Ser-509. Spectrin repeat units follow at residues 529 to 613 (KLLN…REDH) and 626 to 719 (LQTQ…AIVQ). Thr-604 is subject to Phosphothreonine. In terms of domain architecture, SH3 spans 730 to 787 (RGHVPLMAVCDYKQVEVTVHKGDQCQLVGPAQPSHWKVLRGPSSEAAVPSVCFLVPPP). Ser-836 bears the Phosphoserine mark. A Spectrin 4 repeat occupies 1104–1204 (RERVNQLLER…QKFAKQYINA (101 aa)). At Ser-1224 the chain carries Phosphoserine. Residues 1258-2548 (QYIKFISETL…EEIAATQAAA (1291 aa)) adopt a coiled-coil conformation. A central fibrous rod domain region spans residues 1260–2544 (IKFISETLRR…LAHSEEIAAT (1285 aa)). Disordered stretches follow at residues 1274–1293 (ERLA…EGEA) and 1407–1434 (RAEE…DESQ). Ser-1510 is modified (phosphoserine). N6-acetyllysine is present on Lys-1514. Disordered regions lie at residues 1529-1550 (VTQL…ERAR), 1582-1616 (SLAQ…RELA), 1881-1929 (AEDT…AARQ), 1950-1971 (LRER…AAQK), and 2003-2098 (ERLR…KHKK). 3 stretches are compositionally biased toward basic and acidic residues: residues 1587–1616 (DAEK…RELA), 1881–1897 (AEDT…EAAR), and 1905–1917 (EEQR…ERVQ). A compositionally biased stretch (low complexity) spans 1959 to 1968 (ARQLQLAQEA). Positions 2003–2047 (ERLRGEAEAARRAAEEAEEAREQAEREAAQSRKQVEEAERLKQSA) are enriched in basic and acidic residues. The segment covering 2048-2061 (EEQAQARAQAQAAA) has biased composition (low complexity). Residues 2062–2077 (EKLRKEAEQEAARRAQ) are compositionally biased toward basic and acidic residues. Ser-2420 is subject to Phosphoserine. Residue Lys-2425 is modified to N6-acetyllysine. The tract at residues 2457–2476 (REEQQRQQRQMEQEKQELVA) is disordered. The interval 2545 to 4473 (QAAAAKALPN…SLGGPESAVA (1929 aa)) is globular 2. Ser-2563 and Ser-2591 each carry phosphoserine. Plectin repeat units follow at residues 2615-2652 (RQYL…PGTA), 2653-2690 (LILL…PELH), 2691-2728 (HKLL…RDHA), 2729-2766 (IRLL…EEMS), and 2770-2804 (ADPG…PETG). A Phosphothreonine modification is found at Thr-2675. Tyr-2822 is subject to Phosphotyrosine. An N6-acetyllysine mark is found at Lys-2842 and Lys-2880. Plectin repeat units follow at residues 2905–2942 (ALVP…ADSV), 2943–2980 (RRAL…PDVA), 2981–3018 (VALL…PELH), 3019–3056 (EKLL…REQG), and 3057–3094 (LRLL…KETN). A Phosphotyrosine modification is found at Tyr-3151. Lys-3209 carries the N6-acetyllysine modification. Plectin repeat units lie at residues 3274–3311 (RTLL…PSTA), 3312–3349 (TLLL…PELH), 3350–3387 (EKLL…REHA), 3388–3425 (IRLL…EEMS), and 3429–3463 (ADPS…PETG). Phosphothreonine is present on Thr-3574. Position 3579 is a phosphotyrosine (Tyr-3579). Plectin repeat units lie at residues 3609–3646 (WRYL…AEVA), 3647–3684 (RLLL…PELH), 3685–3722 (DRLL…AEEA), 3723–3760 (LRLL…KDTH), 3764–3797 (SEPS…DGSG), and 3800–3834 (LLPL…EATA). The residue at position 3819 (Thr-3819) is a Phosphothreonine. Ser-3843 bears the Phosphoserine mark. Plectin repeat units follow at residues 3852-3889 (QKFL…PGTA), 3890-3927 (FELL…PEFK), 3928-3965 (DRLL…KDHG), 3966-4003 (IRLL…EEMN), 4007-4041 (TDPS…PQTG), and 4043-4094 (RLLP…HQTY). Positions 4039–4089 (QTGLRLLPLKEKKRERKTSSKSSVRKRRVVIVDPETSKEMSVYEAYRKGLI) are binding to intermediate filaments. Phosphoserine is present on residues Ser-4171, Ser-4173, Ser-4174, Ser-4175, Ser-4178, Ser-4179, Ser-4180, and Ser-4181. At Tyr-4182 the chain carries Phosphotyrosine. Phosphoserine is present on residues Ser-4185, Ser-4189, and Ser-4195. 5 Plectin repeats span residues 4197 to 4234 (SDPT…NITG), 4235 to 4272 (QRLL…KIMV), 4273 to 4310 (DRIN…YEAG), 4311 to 4348 (QRFL…ARTA), and 4349 to 4386 (QKLR…EGTG). Thr-4200 is modified (phosphothreonine). Residue Thr-4328 is modified to Phosphothreonine; by CDK1. Ser-4396 and Ser-4402 each carry phosphoserine. Positions 4400 to 4460 (YYSPYSVSGS…SGYGRRYASG (61 aa)) are enriched in low complexity. Residues 4400 to 4473 (YYSPYSVSGS…SLGGPESAVA (74 aa)) are disordered. Residue Tyr-4404 is modified to Phosphotyrosine. Phosphoserine occurs at positions 4405, 4407, and 4411. At Thr-4412 the chain carries Phosphothreonine. The interval 4414-4429 (GSRTGSRTGSRAGSRR) is 4 X 4 AA tandem repeats of G-S-R-X. The residue at position 4415 (Ser-4415) is a Phosphoserine. Arg-4416 and Arg-4429 each carry omega-N-methylarginine. A phosphoserine mark is found at Ser-4431 and Ser-4464.

This sequence belongs to the plakin or cytolinker family. Homodimer or homotetramer. Interacts (via actin-binding domain) with SYNE3. Interacts (via calponin-homology (CH) 1 domain) with VIM (via rod region). Interacts (via N-terminus) with DST isoform 2 (via N-terminus). Interacts with FER. Interacts with TOR1A. Interacts with ANK3. Identified in complexes that contain VIM, EZR, AHNAK, BFSP1, BFSP2, ANK2, PLEC, PRX and spectrin. Phosphorylated by CDK1; regulates dissociation from intermediate filaments during mitosis.

It localises to the cytoplasm. The protein localises to the cytoskeleton. It is found in the cell junction. The protein resides in the hemidesmosome. Its subcellular location is the cell projection. It localises to the podosome. Functionally, interlinks intermediate filaments with microtubules and microfilaments and anchors intermediate filaments to desmosomes or hemidesmosomes. May be involved not only in the cross-linking and stabilization of cytoskeletal intermediate filaments network, but also in the regulation of their dynamics. The protein is Plectin (PLEC) of Cricetulus griseus (Chinese hamster).